A 298-amino-acid polypeptide reads, in one-letter code: Ketohexokinase (298 aa).

4 residues coordinate beta-D-fructose: Asp15, Gly41, Asn42, and Asn45. Residues Arg108, 226 to 229 (AEEG), and 255 to 258 (GAGD) each bind ATP. Asp258 serves as a coordination point for beta-D-fructose.

This sequence belongs to the carbohydrate kinase PfkB family. As to quaternary structure, homodimer. As to expression, most abundant in liver, kidney, gut, spleen and pancreas. Low levels also found in adrenal, muscle, brain and eye.

The catalysed reaction is beta-D-fructose + ATP = beta-D-fructose 1-phosphate + ADP + H(+). Its pathway is carbohydrate metabolism; fructose metabolism. Its activity is regulated as follows. Requires potassium. Inhibition by ADP. Functionally, catalyzes the phosphorylation of the ketose sugar fructose to fructose-1-phosphate. In Homo sapiens (Human), this protein is Ketohexokinase.